A 347-amino-acid polypeptide reads, in one-letter code: Phosphoribosylformylglycinamidine cyclo-ligase (347 aa).

It belongs to the AIR synthase family.

The protein resides in the cytoplasm. The catalysed reaction is 2-formamido-N(1)-(5-O-phospho-beta-D-ribosyl)acetamidine + ATP = 5-amino-1-(5-phospho-beta-D-ribosyl)imidazole + ADP + phosphate + H(+). It participates in purine metabolism; IMP biosynthesis via de novo pathway; 5-amino-1-(5-phospho-D-ribosyl)imidazole from N(2)-formyl-N(1)-(5-phospho-D-ribosyl)glycinamide: step 2/2. This Prochlorococcus marinus (strain MIT 9301) protein is Phosphoribosylformylglycinamidine cyclo-ligase.